A 292-amino-acid polypeptide reads, in one-letter code: 4-hydroxy-tetrahydrodipicolinate synthase (292 aa).

Thr-44 provides a ligand contact to pyruvate. Tyr-132 (proton donor/acceptor) is an active-site residue. The active-site Schiff-base intermediate with substrate is the Lys-161. Ile-203 lines the pyruvate pocket.

This sequence belongs to the DapA family. In terms of assembly, homotetramer.

The protein localises to the cytoplasm. The catalysed reaction is L-aspartate 4-semialdehyde + pyruvate = (2S,4S)-4-hydroxy-2,3,4,5-tetrahydrodipicolinate + H2O + H(+). The protein operates within amino-acid biosynthesis; L-lysine biosynthesis via DAP pathway; (S)-tetrahydrodipicolinate from L-aspartate: step 3/4. Is feedback inhibited by lysine. Is competitively inhibited by 2-oxobutyrate with respect to pyruvate. Its function is as follows. Catalyzes the condensation of (S)-aspartate-beta-semialdehyde [(S)-ASA] and pyruvate to 4-hydroxy-tetrahydrodipicolinate (HTPA). The protein is 4-hydroxy-tetrahydrodipicolinate synthase of Rhizobium meliloti (Ensifer meliloti).